A 796-amino-acid chain; its full sequence is MSFFGLENSGNARDGPLDFEESYKGYGEHELEENDYLNDETFGDNVQVGTDFDFGNPHSSGSSGNAIGGNGVGATARSYVAATAEGISGPRTDGTAAAGPLDLKPMESLWSTAPPPAMAPSPQSTMAPAPAPQQMAPLQPILSMQDLERQQRQMQQQFMNFHAMGHPQGLPQGPPQQQFPMQPASGQPGPSQFAPPPPPPGVNVNMNQMPMGPVQVPVQASPSPIGMSNTPSPGPVVGATKMPLQSGRRSKRDLSPEEQRRLQIRHAKVEKILKYSGLMTPRDKDFITRYQLSQIVTEDPYNEDFYFQVYKIIQRGGITSESNKGLIARAYLEHSGHRLGGRYKRTDIALQRMQSQVEKAVTVAKERPSKLKDQQAAAGNSSQDNKQANTVLGKISSTLNSKNPRRQLQIPRQQPSDPDALKDVTDSLTNVDLASSGSSSTGSSAAAVASKQRRRSSYAFNNGNGATNLNKSGGKKFILELIETVYEEILDLEANLRNGQQTDSTAMWEALHIDDSSYDVNPFISMLSFDKGIKIMPRIFNFLDKQQKLKILQKIFNELSHLQIIILSSYKTTPKPTLTQLKKVDLFQMIILKIIVSFLSNNSNFIEIMGLLLQLIRNNNVSFLTTSKIGLNLITILISRAALIKQDSSRSNILSSPEISTWNEIYDKLFTSLESKIQLIFPPREYNDHIMRLQNDKFMDEAYIWQFLASLALSGKLNHQRIIIDEVRDEIFATINEAETLQKKEKELSVLPQRSQELDTELKSIIYNKEKLYQDLNLFLNVMGLVYRDGEISELK.

Disordered stretches follow at residues 1 to 21 (MSFF…DFEE), 164 to 200 (MGHP…PPPP), and 365 to 465 (KERP…NGNG). At S2 the chain carries N-acetylserine. Residues 165 to 192 (GHPQGLPQGPPQQQFPMQPASGQPGPSQ) show a composition bias toward low complexity. Residues 377–402 (AAGNSSQDNKQANTVLGKISSTLNSK) show a composition bias toward polar residues. Low complexity-rich tracts occupy residues 406–415 (RQLQIPRQQP) and 434–450 (ASSG…AVAS). A phosphoserine mark is found at S456 and S457.

This sequence belongs to the PAT1 family. Associates with the 40S ribosomal subunit. Associates with the heptameric LSM1-LSM7 complex. Interacts directly with LSM2 and LSM3 within the LSM1-LSM7 complex. Interacts with DHH1, LSM1, LSM5, RPB4, RPB7 and with topoisomerase TOP2. Interacts with CDC33, PAB1, TIF4631 and TIF4632 in an RNA-dependent manner. Binds mRNAs.

It localises to the cytoplasm. It is found in the nucleus. The protein resides in the P-body. Its subcellular location is the chromosome. The protein localises to the centromere. It localises to the kinetochore. It is found in the stress granule. Functionally, activator of decapping that functions as a general and active mechanism of translational repression and required for P-body formation. First decay factor recruited to mRNA, at a time when the mRNA is still associated with translation factors. Subsequently, PAT1 recruits the hepta-heterodimer LSM1-LSM7 complex to P-bodies. In association with the LSM1-LSM7 complex, stabilizes the 3' terminus of mRNAs. This association is also required for mosaic virus genomic RNA translation. Also together with the LSM1-LSM7 complex, the LSM1-LSM7 complex binds to osmotic stress-activated mRNAs to attenuate the osmotic stress response, probably by limiting ribosome access to the mRNA and consequently translation. Modulates the rates of mRNA-decapping that occur following deadenylation. Might be required for promoting the formation or the stabilization of the pre-initiation translation complexes. Required for 40S ribosomal subunit joining to capped and/or polyadenylated mRNA. With other P-body components, enhances the formation of retrotransposition-competent Ty1 virus-like particles. Structural component of the kinetochore and associates with centromeres in a NDC10-dependent manner. Involved in maintaining the structural integrity of centromeric chromatin to facilitate faithful chromosome segregation and proper kinetochore function. In Saccharomyces cerevisiae (strain ATCC 204508 / S288c) (Baker's yeast), this protein is Deadenylation-dependent mRNA-decapping factor PAT1 (PAT1).